The following is a 301-amino-acid chain: Small ribosomal subunit protein uS3 (301 aa).

The KH type-2 domain maps to 39–107 (VREYLKAKLK…PVAVNIEEVR (69 aa)). The interval 211–301 (GESPGAKLDA…AAAADGTKTE (91 aa)) is disordered. Basic and acidic residues predominate over residues 224-244 (DEERKPRGPRRDARPGSDRPA). Residues 245 to 257 (PRGARAPRAPAGG) are compositionally biased toward low complexity.

It belongs to the universal ribosomal protein uS3 family. Part of the 30S ribosomal subunit. Forms a tight complex with proteins S10 and S14.

Its function is as follows. Binds the lower part of the 30S subunit head. Binds mRNA in the 70S ribosome, positioning it for translation. This Polaromonas sp. (strain JS666 / ATCC BAA-500) protein is Small ribosomal subunit protein uS3.